The chain runs to 463 residues: L-cystine uptake protein TcyP (463 aa).

10 consecutive transmembrane segments (helical) span residues threonine 3–methionine 23, valine 34–proline 54, tyrosine 73–phenylalanine 93, isoleucine 105–isoleucine 125, proline 184–valine 204, isoleucine 225–methionine 245, methionine 262–leucine 282, leucine 338–alanine 358, valine 369–glycine 389, and phenylalanine 394–isoleucine 414.

This sequence belongs to the dicarboxylate/amino acid:cation symporter (DAACS) (TC 2.A.23) family.

The protein localises to the cell membrane. Its function is as follows. Mediates uptake of L-cystine, the oxidized form of L-cysteine. Although it is more specific for L-cystine, it could also transport a much broader range of amino acids and sulfur compounds including S-methylcysteine. The polypeptide is L-cystine uptake protein TcyP (tcyP) (Bacillus subtilis (strain 168)).